The sequence spans 409 residues: uncharacterized protein (409 aa).

A run of 10 helical transmembrane segments spans residues 22–42 (ILII…VIPA), 58–78 (LGII…VVGW), 99–119 (GILG…VFFI), 174–194 (FGAV…MYIA), 217–237 (NTAI…LIFA), 266–286 (SYIF…GPLA), 293–312 (FVIL…LPFA), 316–338 (LAYG…TVVY), 353–373 (LTVG…GALI), and 378–398 (LTPT…AFLL).

It belongs to the major facilitator superfamily.

It localises to the cell membrane. This is an uncharacterized protein from Bacillus subtilis (strain 168).